The sequence spans 406 residues: Acetate kinase (406 aa).

Mg(2+) is bound at residue N8. Residue K15 coordinates ATP. Residue R92 coordinates substrate. D149 acts as the Proton donor/acceptor in catalysis. Residues 209-213 (HLGNG), 283-285 (DFR), and 331-335 (GVGEN) each bind ATP. E385 serves as a coordination point for Mg(2+).

It belongs to the acetokinase family. As to quaternary structure, homodimer. Requires Mg(2+) as cofactor. The cofactor is Mn(2+).

It localises to the cytoplasm. The catalysed reaction is acetate + ATP = acetyl phosphate + ADP. The protein operates within metabolic intermediate biosynthesis; acetyl-CoA biosynthesis; acetyl-CoA from acetate: step 1/2. Its function is as follows. Catalyzes the formation of acetyl phosphate from acetate and ATP. Can also catalyze the reverse reaction. The polypeptide is Acetate kinase (Corynebacterium aurimucosum (strain ATCC 700975 / DSM 44827 / CIP 107346 / CN-1) (Corynebacterium nigricans)).